The chain runs to 647 residues: Threonine--tRNA ligase (647 aa).

A TGS domain is found at 1 to 63 (MADISIKFPD…ASDGSIEIVT (63 aa)). The tract at residues 242–540 (DHRVIGNQLD…LTEIYKGAFP (299 aa)) is catalytic. The Zn(2+) site is built by Cys-336, His-387, and His-517.

Belongs to the class-II aminoacyl-tRNA synthetase family. In terms of assembly, homodimer. Zn(2+) serves as cofactor.

The protein resides in the cytoplasm. It carries out the reaction tRNA(Thr) + L-threonine + ATP = L-threonyl-tRNA(Thr) + AMP + diphosphate + H(+). Its function is as follows. Catalyzes the attachment of threonine to tRNA(Thr) in a two-step reaction: L-threonine is first activated by ATP to form Thr-AMP and then transferred to the acceptor end of tRNA(Thr). Also edits incorrectly charged L-seryl-tRNA(Thr). The protein is Threonine--tRNA ligase of Levilactobacillus brevis (strain ATCC 367 / BCRC 12310 / CIP 105137 / JCM 1170 / LMG 11437 / NCIMB 947 / NCTC 947) (Lactobacillus brevis).